We begin with the raw amino-acid sequence, 811 residues long: Glycerol-3-phosphate acyltransferase (811 aa).

Residues 309–314 (CHRSHM) carry the HXXXXD motif motif.

This sequence belongs to the GPAT/DAPAT family.

The protein resides in the cell inner membrane. The catalysed reaction is sn-glycerol 3-phosphate + an acyl-CoA = a 1-acyl-sn-glycero-3-phosphate + CoA. It functions in the pathway phospholipid metabolism; CDP-diacylglycerol biosynthesis; CDP-diacylglycerol from sn-glycerol 3-phosphate: step 1/3. The sequence is that of Glycerol-3-phosphate acyltransferase from Colwellia psychrerythraea (strain 34H / ATCC BAA-681) (Vibrio psychroerythus).